The primary structure comprises 290 residues: L-proline cis-3-hydroxylase 2 (290 aa).

Positions 107, 109, and 158 each coordinate Fe cation. 2-oxoglutarate is bound at residue R168.

This sequence belongs to the L-proline cis-4-/cis-3-hydroxylase family. Homodimer. Fe(2+) serves as cofactor.

The enzyme catalyses L-proline + 2-oxoglutarate + O2 = cis-3-hydroxy-L-proline + succinate + CO2. Inhibited by metal ions such as Co(2+), Zn(2+), Ni(2+) or Cu(2+). Is also inhibited by EDTA in vitro. Dioxygenase that catalyzes the 2-oxoglutarate-dependent selective hydroxylation of free L-proline to cis-3-hydroxy-L-proline (cis-3-Hyp). This chain is L-proline cis-3-hydroxylase 2, found in Streptomyces sp.